Reading from the N-terminus, the 131-residue chain is Large ribosomal subunit protein eL32 (131 aa).

This sequence belongs to the eukaryotic ribosomal protein eL32 family.

This chain is Large ribosomal subunit protein eL32 (RPL32), found in Candida glabrata (strain ATCC 2001 / BCRC 20586 / JCM 3761 / NBRC 0622 / NRRL Y-65 / CBS 138) (Yeast).